We begin with the raw amino-acid sequence, 158 residues long: Cyclic pyranopterin monophosphate synthase (158 aa).

Residues L75 to H77 and M113 to E114 contribute to the substrate site. D128 is a catalytic residue.

Belongs to the MoaC family. In terms of assembly, homohexamer; trimer of dimers.

The enzyme catalyses (8S)-3',8-cyclo-7,8-dihydroguanosine 5'-triphosphate = cyclic pyranopterin phosphate + diphosphate. It participates in cofactor biosynthesis; molybdopterin biosynthesis. Its function is as follows. Catalyzes the conversion of (8S)-3',8-cyclo-7,8-dihydroguanosine 5'-triphosphate to cyclic pyranopterin monophosphate (cPMP). The polypeptide is Cyclic pyranopterin monophosphate synthase (Ralstonia pickettii (strain 12J)).